Consider the following 340-residue polypeptide: Cytochrome c peroxidase, mitochondrial (340 aa).

The transit peptide at M1–L17 directs the protein to the mitochondrion. The active-site Proton acceptor is the H101. Residues W175–Q198 form a disordered region. H224 contributes to the heme b binding site. W240 serves as the catalytic Tryptophan radical intermediate.

This sequence belongs to the peroxidase family. Cytochrome c peroxidase subfamily. Forms a one-to-one complex with cytochrome c. The cofactor is heme b.

It localises to the mitochondrion matrix. It is found in the mitochondrion intermembrane space. It catalyses the reaction 2 Fe(II)-[cytochrome c] + H2O2 + 2 H(+) = 2 Fe(III)-[cytochrome c] + 2 H2O. Functionally, destroys radicals which are normally produced within the cells and which are toxic to biological systems. This Yarrowia lipolytica (strain CLIB 122 / E 150) (Yeast) protein is Cytochrome c peroxidase, mitochondrial (CCP1).